The following is a 414-amino-acid chain: MPVCNFFLQGRCRYGDTCWNEHPTGGRGGDYRGNQQPSNRGGFGNRVWINPSQRGGGGSSSAGGSNEWGRGAASARDVQSSEFSFSQNRFSALETQRAGAEDTHTTLDTIQKEMEVWQTSGQWPFSCYSAVNRQISGFIELCPEELRLEYYTSRASGDIQPYINSVQQLANQWRSRVQELRNMSSSTQISVIAELKSSSPPASAPGFGSPGPGFGSATSGFGNTSLSSPPAGFGGAGFGSGPQSSSTFSFAQSKTDFGASNTQQASGFGSSAFAQPSSGFGNPAPSAASFSFAAADSESKPSAGGFGSASGFSFKTATAGQGSGFGSGFGSSSGFGSSSGFGSSSGFGSAFGSAAPAQSSSFGSTGGAADTQSGHGLFTANSELTPEELKEFMAKRFTLGQIPLRPPPADLLMI.

Residues 1–25 form a C3H1-type zinc finger; the sequence is MPVCNFFLQGRCRYGDTCWNEHPTG. 2 disordered regions span residues 24–73 and 200–221; these read TGGR…RGAA and PPAS…TSGF. FG repeat units lie at residues 43-44, 207-208, 214-215, 221-222, 233-234, 238-239, 257-258, 268-269, 280-281, 306-307, 325-326, 329-330, 335-336, 341-342, 347-348, 351-352, and 362-363; these read FG.

In terms of assembly, probable component of the nuclear pore complex (NPC).

It localises to the nucleus. It is found in the nuclear pore complex. The protein resides in the nucleus membrane. Functionally, required for the export of mRNAs containing poly(A) tails from the nucleus into the cytoplasm. The protein is Nucleoporin NUP42 (nup42) of Danio rerio (Zebrafish).